The following is a 179-amino-acid chain: tRNA (cytidine(56)-2'-O)-methyltransferase (179 aa).

Residues Leu82, 112-116 (GAEKV), and 130-137 (VGNQPHSE) contribute to the S-adenosyl-L-methionine site.

This sequence belongs to the aTrm56 family. Homodimer.

It localises to the cytoplasm. The enzyme catalyses cytidine(56) in tRNA + S-adenosyl-L-methionine = 2'-O-methylcytidine(56) in tRNA + S-adenosyl-L-homocysteine + H(+). Its function is as follows. Specifically catalyzes the AdoMet-dependent 2'-O-ribose methylation of cytidine at position 56 in tRNAs. The chain is tRNA (cytidine(56)-2'-O)-methyltransferase from Methanococcus maripaludis (strain C6 / ATCC BAA-1332).